Consider the following 214-residue polypeptide: 3-isopropylmalate dehydratase small subunit (214 aa).

This sequence belongs to the LeuD family. LeuD type 1 subfamily. In terms of assembly, heterodimer of LeuC and LeuD.

The catalysed reaction is (2R,3S)-3-isopropylmalate = (2S)-2-isopropylmalate. It participates in amino-acid biosynthesis; L-leucine biosynthesis; L-leucine from 3-methyl-2-oxobutanoate: step 2/4. Functionally, catalyzes the isomerization between 2-isopropylmalate and 3-isopropylmalate, via the formation of 2-isopropylmaleate. The protein is 3-isopropylmalate dehydratase small subunit of Pseudomonas putida (strain GB-1).